The chain runs to 238 residues: MAADGQCSLPASWRPVTLTHVEYPAGDLSGHLLAYLSLSPVFVIVGFVTLIIFKRELHTISFLGGLALNEGVNWLIKNVIQEPRPCGGPHTAVGTKYGMPSSHSQFMWFFSVYSFLFLYLRMHQTNNARFLDLLWRHVLSLGLLAAAFLVSYSRVYLLYHTWSQVLYGGIAGGLMAVAWFIFTQEVLTPLFPRIAAWPISEFFLIRDTSLIPNVLWFEYTVTRAEARNRQRKLGTKLQ.

The next 4 helical transmembrane spans lie at 33-53 (LAYLSLSPVFVIVGFVTLIIF), 100-120 (PSSHSQFMWFFSVYSFLFLYL), 130-150 (FLDLLWRHVLSLGLLAAAFLV), and 162-182 (WSQVLYGGIAGGLMAVAWFIF).

The protein belongs to the dolichyldiphosphatase family.

It is found in the endoplasmic reticulum membrane. The catalysed reaction is a di-trans,poly-cis-dolichyl diphosphate + H2O = a di-trans,poly-cis-dolichyl phosphate + phosphate + H(+). It participates in protein modification; protein glycosylation. Its function is as follows. Required for efficient N-glycosylation. Necessary for maintaining optimal levels of dolichol-linked oligosaccharides. Hydrolyzes dolichyl pyrophosphate at a very high rate and dolichyl monophosphate at a much lower rate. Does not act on phosphatidate. This is Dolichyldiphosphatase 1 (DOLPP1) from Callithrix jacchus (White-tufted-ear marmoset).